The chain runs to 245 residues: MPYRKYREKKYETKYREAFKLFQEKIGITFTDEKLLIQAFTHSSYVNEHRKKPHEDNERLEFLGDAVLELTVSQYLFQKYPTMSEGELTKLRAAIVCEPSLVRFANELSFGSLVLLGKGEEMTGGRERPALLADVFEAFIGALYLDQGLETVWGFLKEIVYPKINEGAFSHVMDYKSQLQELIQRDGSGNIEYQILQEKGPAHNREFVSRVTLNNVALGLGSGKSKKEAEQQAAAEALKKLKEQL.

One can recognise an RNase III domain in the interval 19–148; the sequence is FKLFQEKIGI…FIGALYLDQG (130 aa). A Mg(2+)-binding site is contributed by glutamate 61. Residue aspartate 65 is part of the active site. Residues aspartate 134 and glutamate 137 each contribute to the Mg(2+) site. Glutamate 137 is an active-site residue. One can recognise a DRBM domain in the interval 174–243; the sequence is DYKSQLQELI…AAEALKKLKE (70 aa).

The protein belongs to the ribonuclease III family. As to quaternary structure, homodimer. Mg(2+) serves as cofactor.

Its subcellular location is the cytoplasm. The catalysed reaction is Endonucleolytic cleavage to 5'-phosphomonoester.. In terms of biological role, digests double-stranded RNA. Involved in the processing of primary rRNA transcript to yield the immediate precursors to the large and small rRNAs (23S and 16S). Processes some mRNAs, and tRNAs when they are encoded in the rRNA operon. Processes pre-crRNA and tracrRNA of type II CRISPR loci if present in the organism. This Bacillus cereus (strain 03BB102) protein is Ribonuclease 3.